A 470-amino-acid chain; its full sequence is L-seryl-tRNA(Sec) selenium transferase (470 aa).

K292 carries the N6-(pyridoxal phosphate)lysine modification.

It belongs to the SelA family. The cofactor is pyridoxal 5'-phosphate.

The protein localises to the cytoplasm. It carries out the reaction L-seryl-tRNA(Sec) + selenophosphate + H(+) = L-selenocysteinyl-tRNA(Sec) + phosphate. Its pathway is aminoacyl-tRNA biosynthesis; selenocysteinyl-tRNA(Sec) biosynthesis; selenocysteinyl-tRNA(Sec) from L-seryl-tRNA(Sec) (bacterial route): step 1/1. Functionally, converts seryl-tRNA(Sec) to selenocysteinyl-tRNA(Sec) required for selenoprotein biosynthesis. The chain is L-seryl-tRNA(Sec) selenium transferase from Moorella thermoacetica (strain ATCC 39073 / JCM 9320).